Reading from the N-terminus, the 540-residue chain is Keratin, type II cytoskeletal 73 (540 aa).

Residues 1-131 are head; it reads MSRQFTYKSG…DPEIQKVRAQ (131 aa). The interval 132 to 167 is coil 1A; the sequence is EREQIKVLNNKFASFIDKVRFLEQQNQVLETKWELL. The IF rod domain maps to 132–445; the sequence is EREQIKVLNN…KLLEGEECRM (314 aa). The linker 1 stretch occupies residues 168–186; sequence QQLDLNNCKNNLEPILEGY. The coil 1B stretch occupies residues 187–278; the sequence is ISNLRKQLET…CLYEGETAQI (92 aa). The linker 12 stretch occupies residues 279-302; it reads QSHISDTSIILSMDNNRNLDLDSI. The segment at 303–441 is coil 2; that stretch reads IAEVRAQYEE…ATYRKLLEGE (139 aa). The tail stretch occupies residues 442 to 540; sequence ECRMSGEYTN…LSSPTKKTMR (99 aa). Residues 502 to 540 are disordered; that stretch reads SGNCSPRGEARTRLGSASEFRDSQGKTLALSSPTKKTMR. Positions 526–540 are enriched in polar residues; it reads GKTLALSSPTKKTMR.

Belongs to the intermediate filament family. As to quaternary structure, heterotetramer of two type I and two type II keratins. Highly expressed in hair follicles from scalp. In hair, it is specifically present in the inner root sheath (IRS) of the hair follicle. Present in the IRS cuticle, but not in Henle or Huxley layers of the IRS. In the IRS cuticle, it is expressed between the lowermost bulb region of the cuticle and the region where Henle cells undergo abrupt terminal differentiation. Detected up to the uppermost cortex region where cuticle cells terminally differentiate (at protein level).

In terms of biological role, has a role in hair formation. Specific component of keratin intermediate filaments in the inner root sheath (IRS) of the hair follicle. This Homo sapiens (Human) protein is Keratin, type II cytoskeletal 73 (KRT73).